The sequence spans 618 residues: UvrABC system protein C (618 aa).

Positions 20–98 constitute a GIY-YIG domain; the sequence is TAPGVYRMYA…IKSLSPRYNV (79 aa). The region spanning 207–242 is the UVR domain; that stretch reads DQLGEEIMHSMQQASEALEFERAARLRDLLSSLRSM.

It belongs to the UvrC family. As to quaternary structure, interacts with UvrB in an incision complex.

The protein resides in the cytoplasm. Functionally, the UvrABC repair system catalyzes the recognition and processing of DNA lesions. UvrC both incises the 5' and 3' sides of the lesion. The N-terminal half is responsible for the 3' incision and the C-terminal half is responsible for the 5' incision. In Xanthomonas campestris pv. campestris (strain B100), this protein is UvrABC system protein C.